The primary structure comprises 91 residues: Non-specific lipid-transfer protein 1 (91 aa).

Cystine bridges form between cysteine 3-cysteine 50, cysteine 13-cysteine 27, cysteine 28-cysteine 73, and cysteine 48-cysteine 87.

The protein belongs to the plant LTP family.

In terms of biological role, plant non-specific lipid-transfer proteins transfer phospholipids as well as galactolipids across membranes. May play a role in wax or cutin deposition in the cell walls of expanding epidermal cells and certain secretory tissues. The protein is Non-specific lipid-transfer protein 1 of Prunus domestica (Garden plum).